The chain runs to 116 residues: Nitrogenase-stabilizing/protective protein NifW (116 aa).

Belongs to the NifW family. Homotrimer; associates with NifD.

In terms of biological role, may protect the nitrogenase Fe-Mo protein from oxidative damage. This Rhodopseudomonas palustris (strain TIE-1) protein is Nitrogenase-stabilizing/protective protein NifW.